The primary structure comprises 368 residues: Putative transport protein bbp_117 (368 aa).

8 consecutive transmembrane segments (helical) span residues 13–35, 39–61, 68–90, 159–181, 216–238, 248–270, 277–299, and 314–336; these read VIFS…RPFF, AWAS…LLWG, VMMT…NSLI, HFGR…YWNG, LGVV…ISGI, IIIF…IWLY, WGTV…RPIL, and GVIG…VLII.

It belongs to the autoinducer-2 exporter (AI-2E) (TC 2.A.86) family.

It is found in the cell membrane. The protein is Putative transport protein bbp_117 of Buchnera aphidicola subsp. Baizongia pistaciae (strain Bp).